A 166-amino-acid chain; its full sequence is Large ribosomal subunit protein uL11 (166 aa).

Arginine 67 carries the N5-methylarginine modification.

This sequence belongs to the universal ribosomal protein uL11 family.

This is Large ribosomal subunit protein uL11 (RPL12) from Encephalitozoon cuniculi (strain GB-M1) (Microsporidian parasite).